The following is a 524-amino-acid chain: Probable metalloreductase AIM14 (524 aa).

7 consecutive transmembrane segments (helical) span residues 24 to 44, 69 to 89, 104 to 121, 143 to 163, 179 to 199, 206 to 226, and 230 to 250; these read VNIKYGYVILALSIVHMVLSI, SIPFWVSTLVWLAIFAFLSIF, RLGRMAYCLVPFTIFISL, WISRLIFATAIGHGLGFLYKW, FLGVTVFALMPVLIFASVNVM, LFYILHNVTLWMFVVLIAFHA, and VPLLAVINLALLGYQIYQRFF. Residues 105–222 form the Ferric oxidoreductase domain; that stretch reads LGRMAYCLVP…VTLWMFVVLI (118 aa). An FAD-binding FR-type domain is found at 248–372; that stretch reads RFFKSYYLHD…GGSGISFGLP (125 aa).

This sequence belongs to the ferric reductase (FRE) family. AIM14 subfamily.

The protein resides in the membrane. Probable cell surface metalloreductase. May be involved in iron or copper homeostasis. This chain is Probable metalloreductase AIM14 (AIM14), found in Scheffersomyces stipitis (strain ATCC 58785 / CBS 6054 / NBRC 10063 / NRRL Y-11545) (Yeast).